Consider the following 159-residue polypeptide: MDFRVMGLESPLFHTLQHMMDMSEDGAGDNKTHNAPTWSYVRDAKAMAATPADVKEYPNSYVFEIDMPGLKSGDIKVQVEDDNLLLICGERKRDEEKEGAKYLRMERRVGKLMRKFVLPENANTDAISAVCQDGVLSVTVQKLPPPEPKKPRTIQVKVA.

The 115-residue stretch at 43-157 (DAKAMAATPA…PKKPRTIQVK (115 aa)) folds into the sHSP domain.

The protein belongs to the small heat shock protein (HSP20) family.

Its subcellular location is the cytoplasm. This is 17.9 kDa class II heat shock protein (HSP17.9-D) from Glycine max (Soybean).